A 454-amino-acid chain; its full sequence is Putative serine carboxypeptidase-like 23 (454 aa).

A signal peptide spans methionine 1–serine 22. N-linked (GlcNAc...) asparagine glycans are attached at residues asparagine 52, asparagine 102, and asparagine 136. Cystine bridges form between cysteine 85-cysteine 338, cysteine 247-cysteine 258, and cysteine 282-cysteine 306. Serine 178 is an active-site residue. Asparagine 287 and asparagine 327 each carry an N-linked (GlcNAc...) asparagine glycan. Catalysis depends on residues aspartate 375 and histidine 427.

Belongs to the peptidase S10 family. In terms of tissue distribution, expression not detected.

The protein localises to the secreted. In terms of biological role, probable carboxypeptidase. This Arabidopsis thaliana (Mouse-ear cress) protein is Putative serine carboxypeptidase-like 23 (SCPL23).